The sequence spans 331 residues: MQLPHYSQLKQQQCRRDRRSLALLLAFLVLTLVVSLCAGERWIWPTAWLDDAQQLFVWQLRLPRTLAVMLVGASLAMSGTVMQAVFDNPLAEPGLLGVANGAGVALVLTVLLGQGLLPVWVLSLSAIAGALLITFLLLHFARRHISNTRLLLIGIALGIICSAVMTWAVYFSTSLDLRQLMYWMMGGFSGIDWRHGWLMLTLLPLLLWLSRQGTVLNGLTLGEIQARQLGIPVYRWRTVLVLVMGVQVGLSVALAGIIAFIGLIIPHMLRLCGLTDQRYLLTGCALAGGGVLLLADTVARVALNSAELPIGVVTATQGSPWFIWLLLRNRL.

7 consecutive transmembrane segments (helical) span residues 21–43, 63–85, 90–112, 116–138, 151–173, 193–210, and 239–261; these read LALL…ERWI, PRTL…MQAV, LAEP…TVLL, LLPV…FLLL, LLIG…YFST, WRHG…LWLS, and VLVL…IAFI.

This sequence belongs to the binding-protein-dependent transport system permease family. FecCD subfamily. In terms of assembly, the complex is composed of two ATP-binding proteins (BtuD), two transmembrane proteins (BtuC) and a solute-binding protein (BtuF).

The protein localises to the cell inner membrane. Functionally, part of the ABC transporter complex BtuCDF involved in vitamin B12 import. Involved in the translocation of the substrate across the membrane. This Pectobacterium atrosepticum (strain SCRI 1043 / ATCC BAA-672) (Erwinia carotovora subsp. atroseptica) protein is Vitamin B12 import system permease protein BtuC.